A 229-amino-acid chain; its full sequence is MSFKREGDDWSQLNVLKKRRVGDLLASYIPEDEALMLRDGRFACAICPHRPVLDTLAMLTAHRAGKKHLSSLKLFYGKKQTGKGTEQNPRQQNELKTESKTEAPLLTQTRIITQNALHRAPHYNSCCRRKHRPEAPAPSVSSPPLPTAEVQLQSAEISKEPEPRERSDAKESAALLASAPMSPTKRRVLNHYLTLRSSGWVPDGRGRWIKDENVEFDSDEEEPPDLPLD.

Ser-2 carries the post-translational modification Phosphoserine. Positions 4 to 20 (KREGDDWSQLNVLKKRR) match the Bipartite nuclear localization signal motif. The segment at 42–74 (FACAICPHRPVLDTLAMLTAHRAGKKHLSSLKL) adopts a Matrin-type zinc-finger fold. Lys-67 participates in a covalent cross-link: Glycyl lysine isopeptide (Lys-Gly) (interchain with G-Cter in SUMO2). Disordered stretches follow at residues 80–105 (QTGK…EAPL) and 128–187 (RRKH…TKRR). Positions 82-92 (GKGTEQNPRQQ) are enriched in polar residues. A compositionally biased stretch (basic and acidic residues) spans 157–171 (ISKEPEPRERSDAKE). A phosphoserine mark is found at Ser-182 and Ser-218. A required for interaction with LUC7L2 region spans residues 187-229 (RVLNHYLTLRSSGWVPDGRGRWIKDENVEFDSDEEEPPDLPLD).

As to quaternary structure, component of the minor spliceosome. Within this complex, interacts with RNF113A, as well as with SF3B1/SF3b155, SF3B2/SF3b145, SF3B3/SF3b130 and CDC5L. May interact with LUC7L2 and SNRNP70.

It is found in the nucleus. It localises to the nucleoplasm. The protein resides in the nucleus speckle. In terms of biological role, as a component of the minor spliceosome, involved in the splicing of U12-type introns in pre-mRNAs. Plays a role in the regulation of primary cilia length and Hedgehog signaling. The chain is Sodium channel modifier 1 (Scnm1) from Mus musculus (Mouse).